We begin with the raw amino-acid sequence, 339 residues long: Ketol-acid reductoisomerase (NADP(+)) (339 aa).

The KARI N-terminal Rossmann domain maps to 1-182; the sequence is MRVYYDRDAD…GGGRAGIIET (182 aa). NADP(+) is bound by residues 24–27, Arg-48, Ser-51, Thr-53, and 83–86; these read YGSQ and DELQ. His-108 is an active-site residue. Gly-134 serves as a coordination point for NADP(+). In terms of domain architecture, KARI C-terminal knotted spans 183-328; that stretch reads SFKEECETDL…AKLREMMPWI (146 aa). 4 residues coordinate Mg(2+): Asp-191, Glu-195, Glu-227, and Glu-231. Ser-252 contacts substrate.

It belongs to the ketol-acid reductoisomerase family. The cofactor is Mg(2+).

The catalysed reaction is (2R)-2,3-dihydroxy-3-methylbutanoate + NADP(+) = (2S)-2-acetolactate + NADPH + H(+). The enzyme catalyses (2R,3R)-2,3-dihydroxy-3-methylpentanoate + NADP(+) = (S)-2-ethyl-2-hydroxy-3-oxobutanoate + NADPH + H(+). It participates in amino-acid biosynthesis; L-isoleucine biosynthesis; L-isoleucine from 2-oxobutanoate: step 2/4. Its pathway is amino-acid biosynthesis; L-valine biosynthesis; L-valine from pyruvate: step 2/4. Its function is as follows. Involved in the biosynthesis of branched-chain amino acids (BCAA). Catalyzes an alkyl-migration followed by a ketol-acid reduction of (S)-2-acetolactate (S2AL) to yield (R)-2,3-dihydroxy-isovalerate. In the isomerase reaction, S2AL is rearranged via a Mg-dependent methyl migration to produce 3-hydroxy-3-methyl-2-ketobutyrate (HMKB). In the reductase reaction, this 2-ketoacid undergoes a metal-dependent reduction by NADPH to yield (R)-2,3-dihydroxy-isovalerate. The polypeptide is Ketol-acid reductoisomerase (NADP(+)) (Rhodopseudomonas palustris (strain BisB5)).